We begin with the raw amino-acid sequence, 1482 residues long: Chromosome partition protein MukB (1482 aa).

Residue 34–41 (GGNGAGKS) coordinates ATP. Coiled coils occupy residues 326-416 (LEAD…AIQY), 509-603 (RHLA…RAPV), 780-805 (RAAR…ATLS), 835-923 (EAEI…AKLE), 979-1116 (LSGN…AKAG), and 1210-1265 (EAIE…LQSV). Residues 666-783 (PGGAEDSRLN…TLPLFGRAAR (118 aa)) form a flexible hinge region.

Belongs to the SMC family. MukB subfamily. In terms of assembly, homodimerization via its hinge domain. Binds to DNA via its C-terminal region. Interacts, and probably forms a ternary complex, with MukE and MukF via its C-terminal region. The complex formation is stimulated by calcium or magnesium. Interacts with tubulin-related protein FtsZ.

It is found in the cytoplasm. The protein resides in the nucleoid. In terms of biological role, plays a central role in chromosome condensation, segregation and cell cycle progression. Functions as a homodimer, which is essential for chromosome partition. Involved in negative DNA supercoiling in vivo, and by this means organize and compact chromosomes. May achieve or facilitate chromosome segregation by condensation DNA from both sides of a centrally located replisome during cell division. This chain is Chromosome partition protein MukB, found in Enterobacter sp. (strain 638).